Reading from the N-terminus, the 727-residue chain is MQQKTKLFLQALKYSIPHLGKCMQKQHLNHYNFADHYYNRIKLKKYHLTKCLQNKPKISELARNIPSRSFSCKDLQPVKQENEKPLPENMDAFEKVRTKLETQPQEEYEIINVEVKHGGFVYYQEGCCLVRSKDEEADNDNYEVLFNLEELKLDQPFIDCIRVAPDEKYVAAKIRTEDSEASTCVIIKLSDQPVMEASFPNVSSFEWVKDEEDEDVLFYTFQRNLRCHDVYRATFGDNKRNERFYTEKDPSYFVFLYLTKDSRFLTINIMNKTTSEVWLIDGLSPWDPPVLIQKRIHGVLYYVEHRDDELYILTNVGEPTEFKLMRTAADTPAIMNWDLFFTMKRNTKVIDLDMFKDHCVLFLKHSNLLYVNVIGLADDSVRSLKLPPWACGFIMDTNSDPKNCPFQLCSPIRSPKYYTYKFAEGKLFEETGHEDPITKTSRVLRLEAKSKDGKLVPMTVFHKTDSEDLQKKPLLIHVYGAYGMDLKMNFRPERRVLVDDGWILAYCHVRGGGELGLQWHADGRLTKKLNGLADLEACIKTLHGQGFSQPSLTTLTAFSAGGVLAGALCNCNPELLRAVTLEAPFLDVLNTMMDTTLPLTLEELEEWGNPSSDEKHKNYIKRYCPYQNIKPQHYPSVHITAYENDERVPLKGIVSYTEKLKEAISEHAKDTGEGYQAPNIILDIQPGGNHVIEDSHKKITAQIKFLYEELGLDSTSVFEDLKKYLKF.

Active-site charge relay system residues include Ser559, Asp645, and His690.

This sequence belongs to the peptidase S9A family. Homodimer. Interacts with the AP-1 complex.

The protein resides in the cytoplasm. It is found in the cytosol. It localises to the golgi apparatus. The protein localises to the trans-Golgi network. Its subcellular location is the cytoskeleton. The protein resides in the nucleus. Serine peptidase whose precise substrate specificity remains unclear. Does not cleave peptides after a arginine or lysine residue. Regulates trans-Golgi network morphology and sorting by regulating the membrane binding of the AP-1 complex. May play a role in the regulation of synaptic vesicle exocytosis. The protein is Prolyl endopeptidase-like (PREPL) of Macaca fascicularis (Crab-eating macaque).